We begin with the raw amino-acid sequence, 517 residues long: RNA-binding region-containing protein 3 (517 aa).

Residues 1–26 are disordered; that stretch reads MAAPEQPLAISRGCTSSSSLSPPRGD. Residues 1–257 form a necessary for interaction with PDCD7 region; it reads MAAPEQPLAI…STDDEDRQRM (257 aa). S21 bears the Phosphoserine mark. The region spanning 27–102 is the RRM 1 domain; it reads RTLLVRHLPA…HTLVVEFAKE (76 aa). Disordered regions lie at residues 106–130 and 213–254; these read VHSP…DDKE and MPLH…DEDR. S108 is modified (phosphoserine). Basic and acidic residues predominate over residues 115–130; the sequence is SEKKKRSDDPVEDDKE. The segment at 211–380 is necessary for binding to m(7)G-capped U12 snRNA; the sequence is DYMPLHAPLP…LDITEEIKED (170 aa). Pro residues predominate over residues 217 to 230; the sequence is APLPPTSPQPPEEP. A compositionally biased stretch (acidic residues) spans 231-252; it reads PLPDEDEELSSEESEYESTDDE. Residues 420 to 503 form the RRM 2 domain; that stretch reads CRIYVKNLAK…KPMVVQFARS (84 aa).

Component of the U11/U12 snRNPs that are part of the U12-type spliceosome. Found in a complex with m(7)G-capped U12 snRNA. Interacts with PDCD7. Highly expressed in pancreas and kidney. Detected at lower levels in heart, brain, placenta, lung, liver, spleen, thymus, prostate, testis, ovary, small intestine, colon and leukocytes.

The protein resides in the nucleus. Functionally, participates in pre-mRNA U12-dependent splicing, performed by the minor spliceosome which removes U12-type introns. U12-type introns comprises less than 1% of all non-coding sequences. Binds to the 3'-stem-loop of m(7)G-capped U12 snRNA. The chain is RNA-binding region-containing protein 3 (RNPC3) from Homo sapiens (Human).